Consider the following 376-residue polypeptide: Putative type I restriction enzyme MpnIIP endonuclease subunit N-terminal part (376 aa).

Functionally, the N-terminal section of a putative type I restriction enzyme that if reconstituted might recognize 5'-GAN(7)TAY-3' and cleave a random distance away. Subunit R is required for both nuclease and ATPase activities, but not for modification. In Mycoplasma pneumoniae (strain ATCC 29342 / M129 / Subtype 1) (Mycoplasmoides pneumoniae), this protein is Putative type I restriction enzyme MpnIIP endonuclease subunit N-terminal part.